Reading from the N-terminus, the 729-residue chain is Kinesin-like protein KAR3 (729 aa).

Positions 1-48 (MESLPRTPTKGRSTQHLSTPSPKNDILAMNGHKRRNTTTPPPKHTLLK) are disordered. The globular stretch occupies residues 1-109 (MESLPRTPTK…ENVNELNRTQ (109 aa)). Polar residues predominate over residues 10 to 22 (KGRSTQHLSTPSP). A coiled-coil region spans residues 110–357 (AILFEKKATL…LEEYIKDTEL (248 aa)). Asn-386, Arg-388, Arg-392, Glu-454, Gly-477, Ser-478, Gly-479, Lys-480, Thr-481, Phe-482, Glu-554, Lys-579, and Thr-694 together coordinate ATP. The 338-residue stretch at 386-723 (NIRVYCRIRP…LRFASKVNST (338 aa)) folds into the Kinesin motor domain.

The protein belongs to the TRAFAC class myosin-kinesin ATPase superfamily. Kinesin family. NCD subfamily. Interacts with CIK1; the interaction is direct. Interacts with VIK1; the interaction is direct.

The protein resides in the cytoplasm. It localises to the cytoskeleton. It is found in the microtubule organizing center. The protein localises to the spindle pole body. Its subcellular location is the nucleus. The protein resides in the chromosome. It localises to the spindle. The catalysed reaction is ATP + H2O = ADP + phosphate + H(+). The enzyme catalyses ATP + H2O + a kinesin associated with a microtubule at position (n) = ADP + phosphate + a kinesin associated with a microtubule at position (n-1, toward the minus end).. In terms of biological role, minus end-directed microtubule (MT) motor involved in spindle midzone assembly, poleward transport of newly captured kinetochores along the lateral side of MTs, karyogamy (nuclear fusion) during mating, and with an essential function in meiosis I. Functions together with the accessory proteins CIK1 or VIK1. Drives the poleward transport of newly captured kinetochores along the lateral side of MTs, both during S-phase and during M-phase. To contribute to spindle midzone assembly during mitotic metaphase, the nuclear KAR3-CIK1 motor cross-links anti-parallel microtubules to align them on the spindle axis; as the motor travels polewards splayed microtubules are pulled into alignment. During the karyogamy (nuclear fusion) step of mating, KAR3-CIK1 cross-links antiparallel cytoplasmic microtubules emanating from the spindle pole bodies of mating partners; the motor activity of KAR3 creates the force that pulls the nuclei together by sliding cross-linked microtubules past one another. KAR3-CIK1 promotes microtubule shortening predominantly from the microtubule plus-end. Together with cytoplasmic VIK1, may act to stabilize microtubules. Requires accessory protein VIK1 for spindle pole body localization and to allow the CIN8 and KIP1 motors to generate outwardly directed spindle forces. Essential during meiosis I. The ATPase activity is stimulated by microtubule-binding. The chain is Kinesin-like protein KAR3 (KAR3) from Saccharomyces cerevisiae (strain ATCC 204508 / S288c) (Baker's yeast).